The chain runs to 145 residues: Putative pre-16S rRNA nuclease (145 aa).

It belongs to the YqgF nuclease family.

The protein localises to the cytoplasm. Could be a nuclease involved in processing of the 5'-end of pre-16S rRNA. The chain is Putative pre-16S rRNA nuclease from Pseudomonas fluorescens (strain Pf0-1).